The primary structure comprises 65 residues: DNA-directed RNA polymerase subunit Rpo10 (65 aa).

4 residues coordinate Zn(2+): Cys7, Cys10, Cys44, and Cys45.

This sequence belongs to the archaeal Rpo10/eukaryotic RPB10 RNA polymerase subunit family. As to quaternary structure, part of the RNA polymerase complex. It depends on Zn(2+) as a cofactor.

The protein localises to the cytoplasm. The enzyme catalyses RNA(n) + a ribonucleoside 5'-triphosphate = RNA(n+1) + diphosphate. Functionally, DNA-dependent RNA polymerase (RNAP) catalyzes the transcription of DNA into RNA using the four ribonucleoside triphosphates as substrates. The protein is DNA-directed RNA polymerase subunit Rpo10 of Pyrobaculum arsenaticum (strain DSM 13514 / JCM 11321 / PZ6).